Here is a 426-residue protein sequence, read N- to C-terminus: Chaperone SurA (426 aa).

The N-terminal stretch at 1 to 13 (MLGALFLSTAASA) is a signal peptide. 2 consecutive PpiC domains span residues 164-265 (SEEL…KLLD) and 274-373 (RDEV…EVLG).

The protein localises to the periplasm. It carries out the reaction [protein]-peptidylproline (omega=180) = [protein]-peptidylproline (omega=0). Its function is as follows. Chaperone involved in the correct folding and assembly of outer membrane proteins. Recognizes specific patterns of aromatic residues and the orientation of their side chains, which are found more frequently in integral outer membrane proteins. May act in both early periplasmic and late outer membrane-associated steps of protein maturation. The sequence is that of Chaperone SurA from Pseudomonas fluorescens (strain ATCC BAA-477 / NRRL B-23932 / Pf-5).